Consider the following 233-residue polypeptide: ATP synthase subunit a (233 aa).

Transmembrane regions (helical) follow at residues 27 to 47 (ANFV…FAIL), 85 to 105 (YLAF…IGVV), 114 to 134 (VPSV…IVGV), 143 to 163 (LAHF…IELV), 189 to 209 (VFLK…HVFV), and 210 to 230 (SFLQ…GAVA).

Belongs to the ATPase A chain family. F-type ATPases have 2 components, CF(1) - the catalytic core - and CF(0) - the membrane proton channel. CF(1) has five subunits: alpha(3), beta(3), gamma(1), delta(1), epsilon(1). CF(0) has three main subunits: a(1), b(2) and c(9-12). The alpha and beta chains form an alternating ring which encloses part of the gamma chain. CF(1) is attached to CF(0) by a central stalk formed by the gamma and epsilon chains, while a peripheral stalk is formed by the delta and b chains.

The protein resides in the cell inner membrane. Key component of the proton channel; it plays a direct role in the translocation of protons across the membrane. In Solibacter usitatus (strain Ellin6076), this protein is ATP synthase subunit a.